Consider the following 122-residue polypeptide: Large ribosomal subunit protein uL14 (122 aa).

The protein belongs to the universal ribosomal protein uL14 family. In terms of assembly, part of the 50S ribosomal subunit. Forms a cluster with proteins L3 and L19. In the 70S ribosome, L14 and L19 interact and together make contacts with the 16S rRNA in bridges B5 and B8.

Functionally, binds to 23S rRNA. Forms part of two intersubunit bridges in the 70S ribosome. The chain is Large ribosomal subunit protein uL14 from Alkaliphilus metalliredigens (strain QYMF).